Here is a 346-residue protein sequence, read N- to C-terminus: Uroporphyrinogen decarboxylase (346 aa).

Residues 26–30, Asp-76, Tyr-153, Ser-208, and His-323 each bind substrate; that span reads RQAGR.

The protein belongs to the uroporphyrinogen decarboxylase family. Homodimer.

The protein localises to the cytoplasm. The catalysed reaction is uroporphyrinogen III + 4 H(+) = coproporphyrinogen III + 4 CO2. The protein operates within porphyrin-containing compound metabolism; protoporphyrin-IX biosynthesis; coproporphyrinogen-III from 5-aminolevulinate: step 4/4. Catalyzes the decarboxylation of four acetate groups of uroporphyrinogen-III to yield coproporphyrinogen-III. The chain is Uroporphyrinogen decarboxylase from Prochlorococcus marinus (strain MIT 9515).